The chain runs to 400 residues: Argininosuccinate synthase (400 aa).

8 to 16 lines the ATP pocket; the sequence is AYSGGLDTS. Y87 and S92 together coordinate L-citrulline. An ATP-binding site is contributed by G117. The L-aspartate site is built by T119, N123, and D124. Residue N123 participates in L-citrulline binding. Positions 127, 175, 259, and 271 each coordinate L-citrulline.

Belongs to the argininosuccinate synthase family. Type 1 subfamily. Homotetramer.

The protein resides in the cytoplasm. The catalysed reaction is L-citrulline + L-aspartate + ATP = 2-(N(omega)-L-arginino)succinate + AMP + diphosphate + H(+). It participates in amino-acid biosynthesis; L-arginine biosynthesis; L-arginine from L-ornithine and carbamoyl phosphate: step 2/3. In Parafrankia sp. (strain EAN1pec), this protein is Argininosuccinate synthase.